Consider the following 447-residue polypeptide: Dihydroorotase (447 aa).

Positions 84 and 86 each coordinate Zn(2+). Substrate-binding positions include 86 to 88 and Asn-118; that span reads HLR. Asp-174, His-201, and His-255 together coordinate Zn(2+). Asn-301 is a substrate binding site. Asp-328 is a Zn(2+) binding site. Residue Asp-328 is part of the active site. Substrate-binding positions include His-332 and 346 to 347; that span reads FG.

The protein belongs to the metallo-dependent hydrolases superfamily. DHOase family. Class I DHOase subfamily. The cofactor is Zn(2+).

The catalysed reaction is (S)-dihydroorotate + H2O = N-carbamoyl-L-aspartate + H(+). It functions in the pathway pyrimidine metabolism; UMP biosynthesis via de novo pathway; (S)-dihydroorotate from bicarbonate: step 3/3. Catalyzes the reversible cyclization of carbamoyl aspartate to dihydroorotate. The chain is Dihydroorotase from Anaplasma phagocytophilum (strain HZ).